The primary structure comprises 461 residues: Fumarate hydratase class II (461 aa).

Substrate-binding positions include 97–99 (SGT), 127–130 (HPND), 137–139 (SSN), and threonine 185. Catalysis depends on histidine 186, which acts as the Proton donor/acceptor. Serine 316 is an active-site residue. Residues serine 317 and 322-324 (KVN) each bind substrate.

The protein belongs to the class-II fumarase/aspartase family. Fumarase subfamily. Homotetramer.

It localises to the cytoplasm. It carries out the reaction (S)-malate = fumarate + H2O. The protein operates within carbohydrate metabolism; tricarboxylic acid cycle; (S)-malate from fumarate: step 1/1. Functionally, involved in the TCA cycle. Catalyzes the stereospecific interconversion of fumarate to L-malate. This chain is Fumarate hydratase class II, found in Staphylococcus saprophyticus subsp. saprophyticus (strain ATCC 15305 / DSM 20229 / NCIMB 8711 / NCTC 7292 / S-41).